Reading from the N-terminus, the 534-residue chain is CTP synthase (534 aa).

An amidoligase domain region spans residues 1–266 (MKTKFLFITG…DERIIDYLNI (266 aa)). Residue Ser14 participates in CTP binding. Residue Ser14 coordinates UTP. ATP contacts are provided by residues 15-20 (SLGKGL) and Asp72. Mg(2+) is bound by residues Asp72 and Glu140. CTP-binding positions include 147-149 (DIE), 187-192 (KTKPTQ), and Lys223. UTP-binding positions include 187–192 (KTKPTQ) and Lys223. 239–241 (RDV) contacts ATP. The Glutamine amidotransferase type-1 domain maps to 291 to 533 (TIAIVGKYVE…VGASLKHHGE (243 aa)). Gly353 contacts L-glutamine. The Nucleophile; for glutamine hydrolysis role is filled by Cys380. Residues 381 to 384 (LGMQ), Glu404, and Arg461 each bind L-glutamine. Catalysis depends on residues His506 and Glu508.

Belongs to the CTP synthase family. As to quaternary structure, homotetramer.

It carries out the reaction UTP + L-glutamine + ATP + H2O = CTP + L-glutamate + ADP + phosphate + 2 H(+). The enzyme catalyses L-glutamine + H2O = L-glutamate + NH4(+). The catalysed reaction is UTP + NH4(+) + ATP = CTP + ADP + phosphate + 2 H(+). The protein operates within pyrimidine metabolism; CTP biosynthesis via de novo pathway; CTP from UDP: step 2/2. Allosterically activated by GTP, when glutamine is the substrate; GTP has no effect on the reaction when ammonia is the substrate. The allosteric effector GTP functions by stabilizing the protein conformation that binds the tetrahedral intermediate(s) formed during glutamine hydrolysis. Inhibited by the product CTP, via allosteric rather than competitive inhibition. Catalyzes the ATP-dependent amination of UTP to CTP with either L-glutamine or ammonia as the source of nitrogen. Regulates intracellular CTP levels through interactions with the four ribonucleotide triphosphates. This chain is CTP synthase, found in Syntrophotalea carbinolica (strain DSM 2380 / NBRC 103641 / GraBd1) (Pelobacter carbinolicus).